The following is a 265-amino-acid chain: Thiazole synthase (265 aa).

Lys-103 (schiff-base intermediate with DXP) is an active-site residue. Residues Gly-164, 190 to 191, and 212 to 213 contribute to the 1-deoxy-D-xylulose 5-phosphate site; these read AG and NT.

Belongs to the ThiG family. Homotetramer. Forms heterodimers with either ThiH or ThiS.

The protein resides in the cytoplasm. It carries out the reaction [ThiS sulfur-carrier protein]-C-terminal-Gly-aminoethanethioate + 2-iminoacetate + 1-deoxy-D-xylulose 5-phosphate = [ThiS sulfur-carrier protein]-C-terminal Gly-Gly + 2-[(2R,5Z)-2-carboxy-4-methylthiazol-5(2H)-ylidene]ethyl phosphate + 2 H2O + H(+). The protein operates within cofactor biosynthesis; thiamine diphosphate biosynthesis. Its function is as follows. Catalyzes the rearrangement of 1-deoxy-D-xylulose 5-phosphate (DXP) to produce the thiazole phosphate moiety of thiamine. Sulfur is provided by the thiocarboxylate moiety of the carrier protein ThiS. In vitro, sulfur can be provided by H(2)S. This chain is Thiazole synthase, found in Bordetella avium (strain 197N).